The primary structure comprises 285 residues: GPN-loop GTPase 3 (285 aa).

13 to 18 (GSGKST) lines the GTP pocket. The short motif at 70 to 72 (GPN) is the Gly-Pro-Asn (GPN)-loop; involved in dimer interface element. 172–175 (TKID) provides a ligand contact to GTP. A disordered region spans residues 253 to 276 (GEDLEPKEPPLENDDDDDDDEGDE). A compositionally biased stretch (acidic residues) spans 263 to 275 (LENDDDDDDDEGD).

This sequence belongs to the GPN-loop GTPase family. Heterodimer with gpn1. Binds to RNA polymerase II (RNAPII).

Its function is as follows. Small GTPase required for proper localization of RNA polymerase II (RNAPII). May act at an RNAP assembly step prior to nuclear import. The chain is GPN-loop GTPase 3 (gpn3) from Dictyostelium discoideum (Social amoeba).